The following is a 137-amino-acid chain: MPNPAELAAHHWGFAAFLLGVVGLLAFMLGVSSLLGSKAFGRSKNEPFESGIVPTGGARLRLSAKFYLVAMLFVIFDVEALFLFAWSVSVRESGWAGLIEATIFIAILLAGLVYLWRIGALDWAPESRRKRQAKLKQ.

3 consecutive transmembrane segments (helical) span residues 12–32 (WGFA…LGVS), 66–86 (FYLV…LFAW), and 95–115 (WAGL…LVYL).

This sequence belongs to the complex I subunit 3 family. NDH-1 is composed of 13 different subunits. Subunits NuoA, H, J, K, L, M, N constitute the membrane sector of the complex.

The protein localises to the cell inner membrane. The enzyme catalyses a quinone + NADH + 5 H(+)(in) = a quinol + NAD(+) + 4 H(+)(out). In terms of biological role, NDH-1 shuttles electrons from NADH, via FMN and iron-sulfur (Fe-S) centers, to quinones in the respiratory chain. The immediate electron acceptor for the enzyme in this species is believed to be ubiquinone. Couples the redox reaction to proton translocation (for every two electrons transferred, four hydrogen ions are translocated across the cytoplasmic membrane), and thus conserves the redox energy in a proton gradient. The protein is NADH-quinone oxidoreductase subunit A 2 of Pseudomonas aeruginosa (strain ATCC 15692 / DSM 22644 / CIP 104116 / JCM 14847 / LMG 12228 / 1C / PRS 101 / PAO1).